Here is a 160-residue protein sequence, read N- to C-terminus: Large ribosomal subunit protein uL10 (160 aa).

Belongs to the universal ribosomal protein uL10 family. In terms of assembly, part of the ribosomal stalk of the 50S ribosomal subunit. The N-terminus interacts with L11 and the large rRNA to form the base of the stalk. The C-terminus forms an elongated spine to which L12 dimers bind in a sequential fashion forming a multimeric L10(L12)X complex.

Its function is as follows. Forms part of the ribosomal stalk, playing a central role in the interaction of the ribosome with GTP-bound translation factors. The chain is Large ribosomal subunit protein uL10 from Wolinella succinogenes (strain ATCC 29543 / DSM 1740 / CCUG 13145 / JCM 31913 / LMG 7466 / NCTC 11488 / FDC 602W) (Vibrio succinogenes).